A 338-amino-acid chain; its full sequence is 1-aminocyclopropane-1-carboxylate deaminase (338 aa).

Lys51 is subject to N6-(pyridoxal phosphate)lysine. Ser78 acts as the Nucleophile in catalysis.

This sequence belongs to the ACC deaminase/D-cysteine desulfhydrase family. It depends on pyridoxal 5'-phosphate as a cofactor.

The enzyme catalyses 1-aminocyclopropane-1-carboxylate + H2O = 2-oxobutanoate + NH4(+). In terms of biological role, catalyzes a cyclopropane ring-opening reaction, the irreversible conversion of 1-aminocyclopropane-1-carboxylate (ACC) to ammonia and alpha-ketobutyrate. Allows growth on ACC as a nitrogen source. The protein is 1-aminocyclopropane-1-carboxylate deaminase of Enterobacter cloacae.